Consider the following 143-residue polypeptide: 1,4-dihydroxy-2-naphthoyl-CoA hydrolase (143 aa).

The active site involves aspartate 14.

Belongs to the 4-hydroxybenzoyl-CoA thioesterase family. DHNA-CoA hydrolase subfamily.

The catalysed reaction is 1,4-dihydroxy-2-naphthoyl-CoA + H2O = 1,4-dihydroxy-2-naphthoate + CoA + H(+). The protein operates within cofactor biosynthesis; phylloquinone biosynthesis. Its pathway is quinol/quinone metabolism; 1,4-dihydroxy-2-naphthoate biosynthesis; 1,4-dihydroxy-2-naphthoate from chorismate: step 7/7. Catalyzes the hydrolysis of 1,4-dihydroxy-2-naphthoyl-CoA (DHNA-CoA) to 1,4-dihydroxy-2-naphthoate (DHNA), a reaction involved in phylloquinone (vitamin K1) biosynthesis. This is 1,4-dihydroxy-2-naphthoyl-CoA hydrolase from Gloeothece citriformis (strain PCC 7424) (Cyanothece sp. (strain PCC 7424)).